The sequence spans 338 residues: Lipoate-protein ligase A (338 aa).

The BPL/LPL catalytic domain maps to 29-216; that stretch reads PATQRVLFLW…AFFAHYGERV (188 aa). ATP-binding positions include arginine 71, 76–79, and lysine 134; that span reads GAVF. Lysine 134 is a binding site for (R)-lipoate.

It belongs to the LplA family. Monomer.

Its subcellular location is the cytoplasm. It carries out the reaction L-lysyl-[lipoyl-carrier protein] + (R)-lipoate + ATP = N(6)-[(R)-lipoyl]-L-lysyl-[lipoyl-carrier protein] + AMP + diphosphate + H(+). It participates in protein modification; protein lipoylation via exogenous pathway; protein N(6)-(lipoyl)lysine from lipoate: step 1/2. It functions in the pathway protein modification; protein lipoylation via exogenous pathway; protein N(6)-(lipoyl)lysine from lipoate: step 2/2. In terms of biological role, catalyzes both the ATP-dependent activation of exogenously supplied lipoate to lipoyl-AMP and the transfer of the activated lipoyl onto the lipoyl domains of lipoate-dependent enzymes. The sequence is that of Lipoate-protein ligase A from Salmonella choleraesuis (strain SC-B67).